The primary structure comprises 282 residues: L-allo-isoleucyltransferase (282 aa).

Cys105 serves as the catalytic Acyl-thioester intermediate. Residues 169 to 261 (HTQSTYTPSD…DGQHHDFVDG (93 aa)) form the AB hydrolase-1 domain.

The protein belongs to the AB hydrolase superfamily.

It catalyses the reaction holo-[CmaD peptidyl-carrier protein] + L-alloisoleucyl-[CmaA peptidyl-carrier protein] = L-alloisoleucyl-[CmaD peptidyl-carrier protein] + holo-[CmaA peptidyl-carrier protein]. Functionally, involved in the biosynthesis of the phytotoxin coronatine (COR). Catalyzes the transfer of the aminoacyl group covalently attached to the pantetheinyl arm of CmaA to the holo-pantetheinyl arm of CmaD. During the shuttling process, CmaE generates a covalent-aminoacyl-S-Cys enzyme intermediate by the action of its donor substrate L-aminoacyl-S-CmaA and delivers it to the sulfhydryl group attached to the phosphopantetheinyl arm on CmaD. In Pseudomonas savastanoi pv. glycinea (Pseudomonas syringae pv. glycinea), this protein is L-allo-isoleucyltransferase.